A 338-amino-acid polypeptide reads, in one-letter code: Lipoate-protein ligase A (338 aa).

Residues 29–216 (PATQRVLFLW…AFFAHYGERV (188 aa)) enclose the BPL/LPL catalytic domain. ATP is bound by residues arginine 71, 76–79 (GAVF), and lysine 134. Lysine 134 serves as a coordination point for (R)-lipoate.

This sequence belongs to the LplA family. Monomer.

The protein localises to the cytoplasm. The enzyme catalyses L-lysyl-[lipoyl-carrier protein] + (R)-lipoate + ATP = N(6)-[(R)-lipoyl]-L-lysyl-[lipoyl-carrier protein] + AMP + diphosphate + H(+). Its pathway is protein modification; protein lipoylation via exogenous pathway; protein N(6)-(lipoyl)lysine from lipoate: step 1/2. The protein operates within protein modification; protein lipoylation via exogenous pathway; protein N(6)-(lipoyl)lysine from lipoate: step 2/2. Catalyzes both the ATP-dependent activation of exogenously supplied lipoate to lipoyl-AMP and the transfer of the activated lipoyl onto the lipoyl domains of lipoate-dependent enzymes. This is Lipoate-protein ligase A from Escherichia coli O6:K15:H31 (strain 536 / UPEC).